A 418-amino-acid polypeptide reads, in one-letter code: F420-non-reducing hydrogenase vhu subunit A (418 aa).

Residues C61 and C64 each coordinate Ni(2+).

The protein belongs to the [NiFe]/[NiFeSe] hydrogenase large subunit family. The F420-non-reducing hydrogenase vhu is composed of four subunits; VhuA, VhuD, VhuG and VhuU. Ni(2+) serves as cofactor.

This Methanocaldococcus jannaschii (strain ATCC 43067 / DSM 2661 / JAL-1 / JCM 10045 / NBRC 100440) (Methanococcus jannaschii) protein is F420-non-reducing hydrogenase vhu subunit A (vhuA).